A 428-amino-acid polypeptide reads, in one-letter code: L-lysine N6-monooxygenase MbtG (428 aa).

Residues M1–A20 form the signal peptide.

The protein belongs to the lysine N(6)-hydroxylase/L-ornithine N(5)-oxygenase family. Requires FAD as cofactor.

The catalysed reaction is L-lysine + NADPH + O2 = N(6)-hydroxy-L-lysine + NADP(+) + H2O. Its pathway is siderophore biosynthesis; mycobactin biosynthesis. Its function is as follows. Flavoprotein monooxygenase required for N-hydroxylation of the two acylated lysine residues during mycobactin assembly, thus producing the hydroxamate groups necessary for iron sequestration. Is also able, but less efficiently, to hydroxylate L-lysine (non acylated) in vitro. The chain is L-lysine N6-monooxygenase MbtG (mbtG) from Mycolicibacterium paratuberculosis (strain ATCC BAA-968 / K-10) (Mycobacterium paratuberculosis).